Reading from the N-terminus, the 477-residue chain is Glutamate--tRNA ligase 2 (477 aa).

The 'HIGH' region motif lies at 9-19; that stretch reads PSPTGFLHIGG. A 'KMSKS' region motif is present at residues 238–242; sequence KLSKR. K241 lines the ATP pocket.

This sequence belongs to the class-I aminoacyl-tRNA synthetase family. Glutamate--tRNA ligase type 1 subfamily. As to quaternary structure, monomer.

Its subcellular location is the cytoplasm. It carries out the reaction tRNA(Glu) + L-glutamate + ATP = L-glutamyl-tRNA(Glu) + AMP + diphosphate. Its function is as follows. Catalyzes the attachment of glutamate to tRNA(Glu) in a two-step reaction: glutamate is first activated by ATP to form Glu-AMP and then transferred to the acceptor end of tRNA(Glu). In Paramagnetospirillum magneticum (strain ATCC 700264 / AMB-1) (Magnetospirillum magneticum), this protein is Glutamate--tRNA ligase 2.